Reading from the N-terminus, the 109-residue chain is MAPKKSKSDAQSIGAKLALVIKSGKVVLGYRSTLKALRSGKAKLILISANTPPLRKSELEYYSMMSKTAVHHYTGTNIELGTACGKLFRCSTMAILDAGDSDILADQQQ.

The protein belongs to the eukaryotic ribosomal protein eL30 family. In terms of assembly, component of the large ribosomal subunit (LSU). Mature N.crassa ribosomes consist of a small (40S) and a large (60S) subunit. The 40S small subunit contains 1 molecule of ribosomal RNA (18S rRNA) and at least 32 different proteins. The large 60S subunit contains 3 rRNA molecules (26S, 5.8S and 5S rRNA) and at least 42 different proteins.

Its subcellular location is the cytoplasm. In terms of biological role, component of the ribosome, a large ribonucleoprotein complex responsible for the synthesis of proteins in the cell. The small ribosomal subunit (SSU) binds messenger RNAs (mRNAs) and translates the encoded message by selecting cognate aminoacyl-transfer RNA (tRNA) molecules. The large subunit (LSU) contains the ribosomal catalytic site termed the peptidyl transferase center (PTC), which catalyzes the formation of peptide bonds, thereby polymerizing the amino acids delivered by tRNAs into a polypeptide chain. The nascent polypeptides leave the ribosome through a tunnel in the LSU and interact with protein factors that function in enzymatic processing, targeting, and the membrane insertion of nascent chains at the exit of the ribosomal tunnel. In Neurospora crassa (strain ATCC 24698 / 74-OR23-1A / CBS 708.71 / DSM 1257 / FGSC 987), this protein is Large ribosomal subunit protein eL30 (rpl-30).